We begin with the raw amino-acid sequence, 2140 residues long: Dedicator of cytokinesis protein 7 (2140 aa).

Residues serine 30, serine 180, and serine 182 each carry the phosphoserine modification. The tract at residues 138-183 (FNPNTLDKQKERQKGLPKQVFESDEAPDGNSYQDDQDDLKRRSMSI) is disordered. A coiled-coil region spans residues 365-395 (FKEADATKNKEKLEKLKSQADQFCQRLGKYR). An N6-methyllysine modification is found at lysine 381. The residue at position 450 (threonine 450) is a Phosphothreonine. Serine 452 is modified (phosphoserine). A C2 DOCK-type domain is found at 561-727 (RNLLYIYPQS…GVFNVEVVAV (167 aa)). Phosphoserine is present on residues serine 862, serine 864, serine 882, serine 888, serine 896, serine 900, and serine 905. Low complexity predominate over residues 888-901 (SLNLNRSRSLSNSN). The interval 888 to 971 (SLNLNRSRSL…MSSHTETSSF (84 aa)) is disordered. Phosphothreonine is present on residues threonine 907 and threonine 909. Serine 910, serine 929, serine 964, serine 1383, lysine 1390, alanine 1394, glutamate 1398, tyrosine 1421, serine 1425, arginine 1429, serine 1430, serine 1432, serine 1434, and serine 1438 each carry phosphoserine. A compositionally biased stretch (polar residues) spans 943-971 (SNPSPSAESTQAMDRSCNRMSSHTETSSF). The 437-residue stretch at 1678–2114 (KGYQTSPDLR…LQPLINRKIP (437 aa)) folds into the DOCKER domain. An N6-acetyllysine modification is found at lysine 1962. The stretch at 2086–2112 (DQKEYQRELERNYHRLKEALQPLINRK) forms a coiled coil. Serine 2129 is subject to Phosphoserine.

This sequence belongs to the DOCK family. In terms of assembly, component of the DOCK7-induced septin displacement/DISP complex, at least composed of DOCK7, LRCH3 and MYO6. Interacts with TSC1. Interacts with nucleotide-free RAC1 and RAC3. Interacts with TACC3 and CRY1. Interacts with NOD2. As to expression, widely expressed.

It is found in the cell projection. Its subcellular location is the axon. In terms of biological role, functions as a guanine nucleotide exchange factor (GEF), which activates Rac1 and Rac3 Rho small GTPases by exchanging bound GDP for free GTP. Does not have a GEF activity for CDC42. Required for STMN1 'Ser-15' phosphorylation during axon formation and consequently for neuronal polarization. As part of the DISP complex, may regulate the association of septins with actin and thereby regulate the actin cytoskeleton. Has a role in pigmentation. Involved in the regulation of cortical neurogenesis through the control of radial glial cells (RGCs) proliferation versus differentiation; negatively regulates the basal-to-apical interkinetic nuclear migration of RGCs by antagonizing the microtubule growth-promoting function of TACC3. The polypeptide is Dedicator of cytokinesis protein 7 (DOCK7) (Homo sapiens (Human)).